Here is a 468-residue protein sequence, read N- to C-terminus: Peripherin (468 aa).

The span at 1-16 shows a compositional bias: low complexity; the sequence is MSHHSSGLRSSISSTS. Positions 1–22 are disordered; that stretch reads MSHHSSGLRSSISSTSYRRTFG. The interval 1–96 is head; that stretch reads MSHHSSGLRS…FLATRSNEKQ (96 aa). The residue at position 17 (Y17) is a 3'-nitrotyrosine. A phosphoserine mark is found at S28, S50, and S59. One can recognise an IF rod domain in the interval 94-404; it reads EKQELQELND…KLLEGEESRI (311 aa). Residues 97–129 form a coil 1A region; it reads ELQELNDRFANFIEKVRFLEQQNAALRGELSQA. Residues 130-140 form a linker 1 region; that stretch reads RGQEPARADQL. Residues 141-236 form a coil 1B region; it reads CQQELRELRR…KLHEEELRDL (96 aa). The interval 237–259 is linker 2; that stretch reads QVSVESQQVQQVEVEATVKPELT. Residues 260–402 are coil 2; that stretch reads AALRDIRAQY…YRKLLEGEES (143 aa). Residue Y376 is modified to 3'-nitrotyrosine. Residues 403 to 468 are tail; it reads RISVPVHSFA…ELDKSSIHSY (66 aa). Residues 445 to 468 form a disordered region; sequence GEKVVTESQKEQHSELDKSSIHSY. Y468 bears the Phosphotyrosine mark.

This sequence belongs to the intermediate filament family. In terms of assembly, forms homodimers (in vitro). Homopolymerizes into a filamentous network (in vitro). Forms heterodimers with NEFL, NEFM or NEFH (in vitro). Interacts with DST (via C-terminus). Interacts with RAB7A; the interaction is direct. Interacts with PRKCE (via phorbol-ester/DAG-type 2 domain). In terms of processing, phosphorylated; phosphorylation increases after nerve injury in regenerating neurons. Expressed in hypoglossal motor neurons (at protein level). Expressed in the small and large sensory neurons of the dorsal root ganglion (at protein level). Expressed in cutaneous and muscular sensory neurons.

It localises to the cytoplasm. The protein localises to the cytoskeleton. The protein resides in the cell projection. It is found in the axon. Its subcellular location is the perikaryon. In terms of biological role, class-III neuronal intermediate filament protein. My form an independent structural network without the involvement of other neurofilaments or may cooperate with the neuronal intermediate filament proteins NEFL, NEFH, NEFM and INA to form a filamentous network. Assembly of the neuronal intermediate filaments may be regulated by RAB7A. Plays a role in the development of unmyelinated sensory neurons. May be involved in axon elongation and axon regeneration after injury. Inhibits neurite extension in type II spiral ganglion neurons in the cochlea. The protein is Peripherin (Prph) of Rattus norvegicus (Rat).